A 358-amino-acid polypeptide reads, in one-letter code: 3-dehydroquinate synthase (358 aa).

Residues 70-75 (DGEQYK), 104-108 (GVIGD), 128-129 (TT), lysine 141, lysine 150, and 168-171 (CLHT) each bind NAD(+). Residues glutamate 183, histidine 246, and histidine 263 each coordinate Zn(2+).

Belongs to the sugar phosphate cyclases superfamily. Dehydroquinate synthase family. Co(2+) serves as cofactor. The cofactor is Zn(2+). Requires NAD(+) as cofactor.

It localises to the cytoplasm. The catalysed reaction is 7-phospho-2-dehydro-3-deoxy-D-arabino-heptonate = 3-dehydroquinate + phosphate. It participates in metabolic intermediate biosynthesis; chorismate biosynthesis; chorismate from D-erythrose 4-phosphate and phosphoenolpyruvate: step 2/7. Functionally, catalyzes the conversion of 3-deoxy-D-arabino-heptulosonate 7-phosphate (DAHP) to dehydroquinate (DHQ). The chain is 3-dehydroquinate synthase from Shewanella loihica (strain ATCC BAA-1088 / PV-4).